We begin with the raw amino-acid sequence, 54 residues long: MKLYISPPQTLEYLKFEYRHFPFKACEYLKFQNLHQYIRWYYQLFPLMVQLVAL.

This is an uncharacterized protein from Dictyostelium discoideum (Social amoeba).